A 43-amino-acid chain; its full sequence is Potassium channel toxin gamma-KTx 4.1 (43 aa).

Cystine bridges form between C5-C23, C11-C34, C20-C39, and C24-C41.

It belongs to the ergtoxin family. Gamma-KTx 4 subfamily. In terms of tissue distribution, expressed by the venom gland.

It localises to the secreted. In terms of biological role, reversibly blocks Kv11/ERG potassium channels. The polypeptide is Potassium channel toxin gamma-KTx 4.1 (Centruroides limpidus (Mexican scorpion)).